The chain runs to 278 residues: Elongation factor Ts (278 aa).

Residues 80-83 form an involved in Mg(2+) ion dislocation from EF-Tu region; sequence TDFV.

Belongs to the EF-Ts family.

The protein resides in the cytoplasm. In terms of biological role, associates with the EF-Tu.GDP complex and induces the exchange of GDP to GTP. It remains bound to the aminoacyl-tRNA.EF-Tu.GTP complex up to the GTP hydrolysis stage on the ribosome. In Renibacterium salmoninarum (strain ATCC 33209 / DSM 20767 / JCM 11484 / NBRC 15589 / NCIMB 2235), this protein is Elongation factor Ts.